Here is a 434-residue protein sequence, read N- to C-terminus: Methylenetetrahydrofolate--tRNA-(uracil-5-)-methyltransferase TrmFO (434 aa).

Gly10–Gly15 contributes to the FAD binding site.

This sequence belongs to the MnmG family. TrmFO subfamily. The cofactor is FAD.

The protein localises to the cytoplasm. It carries out the reaction uridine(54) in tRNA + (6R)-5,10-methylene-5,6,7,8-tetrahydrofolate + NADH + H(+) = 5-methyluridine(54) in tRNA + (6S)-5,6,7,8-tetrahydrofolate + NAD(+). It catalyses the reaction uridine(54) in tRNA + (6R)-5,10-methylene-5,6,7,8-tetrahydrofolate + NADPH + H(+) = 5-methyluridine(54) in tRNA + (6S)-5,6,7,8-tetrahydrofolate + NADP(+). Catalyzes the folate-dependent formation of 5-methyl-uridine at position 54 (M-5-U54) in all tRNAs. The polypeptide is Methylenetetrahydrofolate--tRNA-(uracil-5-)-methyltransferase TrmFO (Bacillus cereus (strain ATCC 10987 / NRS 248)).